The primary structure comprises 392 residues: Phosphopentomutase (392 aa).

6 residues coordinate Mn(2+): Asp13, Asp286, His291, Asp327, His328, and His339.

Belongs to the phosphopentomutase family. Requires Mn(2+) as cofactor.

Its subcellular location is the cytoplasm. The catalysed reaction is 2-deoxy-alpha-D-ribose 1-phosphate = 2-deoxy-D-ribose 5-phosphate. It catalyses the reaction alpha-D-ribose 1-phosphate = D-ribose 5-phosphate. It functions in the pathway carbohydrate degradation; 2-deoxy-D-ribose 1-phosphate degradation; D-glyceraldehyde 3-phosphate and acetaldehyde from 2-deoxy-alpha-D-ribose 1-phosphate: step 1/2. Isomerase that catalyzes the conversion of deoxy-ribose 1-phosphate (dRib-1-P) and ribose 1-phosphate (Rib-1-P) to deoxy-ribose 5-phosphate (dRib-5-P) and ribose 5-phosphate (Rib-5-P), respectively. The sequence is that of Phosphopentomutase from Oceanobacillus iheyensis (strain DSM 14371 / CIP 107618 / JCM 11309 / KCTC 3954 / HTE831).